The following is a 742-amino-acid chain: Photosystem I P700 chlorophyll a apoprotein A2 (742 aa).

A run of 8 helical transmembrane segments spans residues leucine 46 to alanine 69, leucine 135 to glutamine 158, leucine 175 to isoleucine 199, isoleucine 273 to tyrosine 291, leucine 336 to glycine 359, serine 375 to valine 401, alanine 423 to histidine 445, and phenylalanine 525 to isoleucine 543. Residues cysteine 567 and cysteine 576 each contribute to the [4Fe-4S] cluster site. A run of 2 helical transmembrane segments spans residues alanine 583–tryptophan 604 and leucine 651–isoleucine 673. Divinyl chlorophyll a-binding residues include histidine 662, methionine 670, and tyrosine 678. Tryptophan 679 is a binding site for phylloquinone. A helical transmembrane segment spans residues leucine 715–alanine 735.

This sequence belongs to the PsaA/PsaB family. In terms of assembly, the PsaA/B heterodimer binds the P700 divinyl chlorophyll special pair and subsequent electron acceptors. PSI consists of a core antenna complex that captures photons, and an electron transfer chain that converts photonic excitation into a charge separation. The cyanobacterial PSI reaction center is composed of one copy each of PsaA,B,C,D,E,F,I,J,K,L,M and X, and forms trimeric complexes. PSI electron transfer chain: 5 divinyl chlorophyll a, 1 divinyl chlorophyll a', 2 phylloquinones and 3 4Fe-4S clusters. PSI core antenna: 90 divinyl chlorophyll a, 22 carotenoids, 3 phospholipids and 1 galactolipid. P700 is a divinyl chlorophyll a/divinyl chlorophyll a' dimer, A0 is one or more divinyl chlorophyll a, A1 is one or both phylloquinones and FX is a shared 4Fe-4S iron-sulfur center. is required as a cofactor.

It localises to the cellular thylakoid membrane. It catalyses the reaction reduced [plastocyanin] + hnu + oxidized [2Fe-2S]-[ferredoxin] = oxidized [plastocyanin] + reduced [2Fe-2S]-[ferredoxin]. Its function is as follows. PsaA and PsaB bind P700, the primary electron donor of photosystem I (PSI), as well as the electron acceptors A0, A1 and FX. PSI is a plastocyanin/cytochrome c6-ferredoxin oxidoreductase, converting photonic excitation into a charge separation, which transfers an electron from the donor P700 chlorophyll pair to the spectroscopically characterized acceptors A0, A1, FX, FA and FB in turn. Oxidized P700 is reduced on the lumenal side of the thylakoid membrane by plastocyanin or cytochrome c6. The chain is Photosystem I P700 chlorophyll a apoprotein A2 from Prochlorococcus marinus (strain NATL2A).